Here is a 1144-residue protein sequence, read N- to C-terminus: Guanine nucleotide-binding protein G(s) subunit alpha isoforms XLas (1144 aa).

4 disordered regions span residues 1-186 (MGML…LAPG), 316-558 (DDDT…PAAG), 622-657 (SASA…SAWP), and 735-772 (RSRS…DKKR). A compositionally biased stretch (low complexity) spans 31–46 (LEAQGAAAPGAGVGPA). The segment covering 343–356 (KSEHAKRPPLERQA) has biased composition (basic and acidic residues). Residues 358 to 369 (ETGNSPISSTTA) show a composition bias toward polar residues. Residues 370 to 381 (EEAKVPSLERGE) show a composition bias toward basic and acidic residues. Composition is skewed to low complexity over residues 467–499 (PAAA…AAEA) and 518–558 (EPAA…PAAG). The segment covering 644-654 (PPTPRPAPRPS) has biased composition (pro residues). The span at 743–767 (KAKDPMEERRKQMRKEAMEMREQKR) shows a compositional bias: basic and acidic residues. Residues 745-772 (KDPMEERRKQMRKEAMEMREQKRADKKR) adopt a coiled-coil conformation. A G-alpha domain is found at 789–1144 (CTHRLLLLGA…RMHLRQYELL (356 aa)). A G1 motif region spans residues 792–805 (RLLLLGAGESGKST). Residue 797–805 (GAGESGKST) participates in GTP binding. Ser804 contributes to the Mg(2+) binding site. The tract at residues 818-840 (FNGEGGEEDPQAARSNSDGEKAT) is disordered. A coiled-coil region spans residues 837–863 (EKATKVQDIKNNLKEAIETIVAAMSNL). The segment at 946-954 (DLPRCRVLT) is G2 motif. Residues 947-954 (LPRCRVLT), 973-977 (DVGGQ), and 1042-1045 (NKQD) each bind GTP. The residue at position 951 (Arg951) is an ADP-ribosylarginine; by cholera toxin. A Mg(2+)-binding site is contributed by Thr954. The interval 969–978 (FHMFDVGGQR) is G3 motif. The tract at residues 1038–1045 (ILFLNKQD) is G4 motif. Ser1102 carries the post-translational modification Phosphoserine. The tract at residues 1114–1119 (TCAVDT) is G5 motif. Ala1116 provides a ligand contact to GTP.

Belongs to the G-alpha family. G(s) subfamily. As to quaternary structure, g proteins are composed of 3 units; alpha, beta and gamma. The alpha chain contains the guanine nucleotide binding site. Interacts through its N-terminal region with ALEX which is produced from the same locus in a different open reading frame. This interaction may inhibit its adenylyl cyclase-stimulating activity. Interacts with MAGED2. Enriched in neuroendocrine tissues with a particularly high level of expression in pituitary where it is abundant in intermediate and anterior lobes. In adrenal gland, found in central region containing medullary chromaffin cells but not in cortex. In cerebellum, strongly expressed in perikarya of Purkinje cells. Not detected in liver, kidney or neurohypophysis.

The protein resides in the cell membrane. It localises to the apical cell membrane. Guanine nucleotide-binding proteins (G proteins) function as transducers in numerous signaling pathways controlled by G protein-coupled receptors (GPCRs). Signaling involves the activation of adenylyl cyclases, resulting in increased levels of the signaling molecule cAMP. GNAS functions downstream of several GPCRs, including beta-adrenergic receptors. XLas isoforms interact with the same set of receptors as Gnas isoforms. The chain is Guanine nucleotide-binding protein G(s) subunit alpha isoforms XLas from Rattus norvegicus (Rat).